The sequence spans 454 residues: Chaperone SurA (454 aa).

Positions 1–28 (MKISSFRKGRWLGALALFAVVCWSMADA) are cleaved as a signal peptide. PpiC domains follow at residues 177–278 (DREY…KMLA) and 287–386 (LTKT…QVLE). The interval 431 to 454 (LDETPASPGEDAPAGEDSPETFMR) is disordered. The segment covering 443–454 (PAGEDSPETFMR) has biased composition (acidic residues).

It localises to the periplasm. It carries out the reaction [protein]-peptidylproline (omega=180) = [protein]-peptidylproline (omega=0). Functionally, chaperone involved in the correct folding and assembly of outer membrane proteins. Recognizes specific patterns of aromatic residues and the orientation of their side chains, which are found more frequently in integral outer membrane proteins. May act in both early periplasmic and late outer membrane-associated steps of protein maturation. The protein is Chaperone SurA of Methylococcus capsulatus (strain ATCC 33009 / NCIMB 11132 / Bath).